Consider the following 275-residue polypeptide: MNYNQPATLQAAILDWAGTVVDFGSFAPTQIFVEAFAEFGVQVSLEEARGPMGMGKWDHIRTLCDIPAIAERYRAVFGRLPSDDDVTAIYERFMPLQIEKIAEHSALIPGALQAIAELRGMGLKIGSCSGYPAVVMEKVVALAETNGYVADHVVATDEVPNGRPWPAQALANVIALGIDDVAACVKVDDTWPGILEGRRAGMWTVALTCSGNALGLTYEQYKALPAAELERERTRIEQMFEGSRPHYLIETIAELPAVVRDINARLARGEMPQGN.

The active-site Nucleophile is the aspartate 15. Positions 15 and 17 each coordinate Mg(2+). The Schiff-base intermediate with substrate role is filled by lysine 56. Aspartate 189 is a binding site for Mg(2+).

Belongs to the HAD-like hydrolase superfamily. PhnX family. Homodimer. It depends on Mg(2+) as a cofactor.

The enzyme catalyses phosphonoacetaldehyde + H2O = acetaldehyde + phosphate + H(+). In terms of biological role, involved in phosphonate degradation. The polypeptide is Phosphonoacetaldehyde hydrolase (Pseudomonas aeruginosa (strain UCBPP-PA14)).